Here is a 144-residue protein sequence, read N- to C-terminus: Effector EagT6 (144 aa).

Homodimer. Two dimers interact with Tse6; this interaction is crucial for Tse6 loading onto VgrG1a.

Plays an essential role in toxin Tse6 delivery to target cells and specifically in the loading of Tse6 onto VgrG1a. The polypeptide is Effector EagT6 (Pseudomonas aeruginosa (strain ATCC 15692 / DSM 22644 / CIP 104116 / JCM 14847 / LMG 12228 / 1C / PRS 101 / PAO1)).